The primary structure comprises 302 residues: Putative S-adenosyl-L-methionine-dependent methyltransferase MAP_1622c (302 aa).

Residues aspartate 129 and 158–159 (DL) contribute to the S-adenosyl-L-methionine site.

It belongs to the UPF0677 family.

Functionally, exhibits S-adenosyl-L-methionine-dependent methyltransferase activity. The sequence is that of Putative S-adenosyl-L-methionine-dependent methyltransferase MAP_1622c from Mycolicibacterium paratuberculosis (strain ATCC BAA-968 / K-10) (Mycobacterium paratuberculosis).